A 22-amino-acid chain; its full sequence is Heat shock 70-related protein 1, mitochondrial (22 aa).

It belongs to the heat shock protein 70 family.

It is found in the mitochondrion. This is Heat shock 70-related protein 1, mitochondrial from Leishmania tarentolae (Sauroleishmania tarentolae).